A 179-amino-acid polypeptide reads, in one-letter code: MTEKIISEIILDLVFQCNDFSQFSNKLKDTKSKLIFESIFWEKVFLSWINIILKKKDYELPNYISEKKSFSLGLRIISNQEIASLNKKWMQKNGPTDVLSFPIISDESLNNLDHIELGDIFISLEMALEQSYEYKHTIYREMIWLASHGFLHLLGWEHNNENDLENMLNLQEYLITRLD.

His148, His152, and His158 together coordinate Zn(2+).

Belongs to the endoribonuclease YbeY family. The cofactor is Zn(2+).

It is found in the cytoplasm. In terms of biological role, single strand-specific metallo-endoribonuclease involved in late-stage 70S ribosome quality control and in maturation of the 3' terminus of the 16S rRNA. The protein is Endoribonuclease YbeY of Prochlorococcus marinus (strain MIT 9215).